Consider the following 342-residue polypeptide: MTIALTGGGTGGHLAIVRCLLESAIKKNIECVYIGSQNGQDKAWFENEVRFKEKFFLSSKGVVNQSKFGKISSLLHTLKLSKDCREIFKKYHIQAVFSVGGYSAAPASFAALFSHLPLFIHEQNSKSGSLNMLLKPFATKFFSAFEKEISPYPVADKFFDNARIRKELKNIIFLGGSQGAQFINELALNLAPKLQEQNIKIIHQCGKNDFEKCKKHYQSLNIQADIFDFSLNLEEKMKNADLAISRAGASTLFELCANTLPTIFIPYPYAAKNHQYFNAKFLQDQALCQIFMQNSINLDEFFKSILKLNLENISTRLQNITQKNGADMLIQKALFDNLTFIR.

Residues 10 to 12 (TGG), Asn124, Ser177, and Gln275 contribute to the UDP-N-acetyl-alpha-D-glucosamine site.

Belongs to the glycosyltransferase 28 family. MurG subfamily.

It localises to the cell inner membrane. The enzyme catalyses di-trans,octa-cis-undecaprenyl diphospho-N-acetyl-alpha-D-muramoyl-L-alanyl-D-glutamyl-meso-2,6-diaminopimeloyl-D-alanyl-D-alanine + UDP-N-acetyl-alpha-D-glucosamine = di-trans,octa-cis-undecaprenyl diphospho-[N-acetyl-alpha-D-glucosaminyl-(1-&gt;4)]-N-acetyl-alpha-D-muramoyl-L-alanyl-D-glutamyl-meso-2,6-diaminopimeloyl-D-alanyl-D-alanine + UDP + H(+). The protein operates within cell wall biogenesis; peptidoglycan biosynthesis. Functionally, cell wall formation. Catalyzes the transfer of a GlcNAc subunit on undecaprenyl-pyrophosphoryl-MurNAc-pentapeptide (lipid intermediate I) to form undecaprenyl-pyrophosphoryl-MurNAc-(pentapeptide)GlcNAc (lipid intermediate II). The chain is UDP-N-acetylglucosamine--N-acetylmuramyl-(pentapeptide) pyrophosphoryl-undecaprenol N-acetylglucosamine transferase from Campylobacter jejuni subsp. jejuni serotype O:6 (strain 81116 / NCTC 11828).